The chain runs to 130 residues: Phosphoribosyl-AMP cyclohydrolase (130 aa).

Asp-77 lines the Mg(2+) pocket. Position 78 (Cys-78) interacts with Zn(2+). Mg(2+) contacts are provided by Asp-79 and Asp-81. Positions 95 and 102 each coordinate Zn(2+).

This sequence belongs to the PRA-CH family. As to quaternary structure, homodimer. The cofactor is Mg(2+). It depends on Zn(2+) as a cofactor.

The protein localises to the cytoplasm. It carries out the reaction 1-(5-phospho-beta-D-ribosyl)-5'-AMP + H2O = 1-(5-phospho-beta-D-ribosyl)-5-[(5-phospho-beta-D-ribosylamino)methylideneamino]imidazole-4-carboxamide. Its pathway is amino-acid biosynthesis; L-histidine biosynthesis; L-histidine from 5-phospho-alpha-D-ribose 1-diphosphate: step 3/9. Functionally, catalyzes the hydrolysis of the adenine ring of phosphoribosyl-AMP. The sequence is that of Phosphoribosyl-AMP cyclohydrolase from Pseudomonas syringae pv. tomato (strain ATCC BAA-871 / DC3000).